We begin with the raw amino-acid sequence, 841 residues long: Probable outer membrane protein pmp2 (841 aa).

An N-terminal signal peptide occupies residues 1–24 (MKIPLRFLLISLVPTLSMSNLLGA). An Autotransporter domain is found at 537-841 (GAPYEKRFWV…NVDAGSKIKF (305 aa)).

It belongs to the PMP outer membrane protein family.

Its subcellular location is the secreted. The protein resides in the cell wall. It is found in the cell outer membrane. The protein is Probable outer membrane protein pmp2 (pmp2) of Chlamydia pneumoniae (Chlamydophila pneumoniae).